Reading from the N-terminus, the 646-residue chain is Acetyl-coenzyme A synthetase (646 aa).

Residues 190 to 193 (RAGK) and threonine 309 each bind CoA. Residues 385–387 (GEP), 409–414 (DTWWQT), aspartate 498, and arginine 513 each bind ATP. Position 521 (serine 521) interacts with CoA. Arginine 524 contacts ATP. Residues valine 535, histidine 537, and valine 540 each coordinate Mg(2+). Arginine 582 is a binding site for CoA. Lysine 607 is subject to N6-acetyllysine.

This sequence belongs to the ATP-dependent AMP-binding enzyme family. Requires Mg(2+) as cofactor. Post-translationally, acetylated. Deacetylation by the SIR2-homolog deacetylase activates the enzyme.

It catalyses the reaction acetate + ATP + CoA = acetyl-CoA + AMP + diphosphate. In terms of biological role, catalyzes the conversion of acetate into acetyl-CoA (AcCoA), an essential intermediate at the junction of anabolic and catabolic pathways. AcsA undergoes a two-step reaction. In the first half reaction, AcsA combines acetate with ATP to form acetyl-adenylate (AcAMP) intermediate. In the second half reaction, it can then transfer the acetyl group from AcAMP to the sulfhydryl group of CoA, forming the product AcCoA. The chain is Acetyl-coenzyme A synthetase from Pseudoalteromonas atlantica (strain T6c / ATCC BAA-1087).